We begin with the raw amino-acid sequence, 352 residues long: UDP-N-acetylglucosamine--N-acetylmuramyl-(pentapeptide) pyrophosphoryl-undecaprenol N-acetylglucosamine transferase (352 aa).

Residues S195 and Q287 each coordinate UDP-N-acetyl-alpha-D-glucosamine.

It belongs to the glycosyltransferase 28 family. MurG subfamily.

Its subcellular location is the cell membrane. It catalyses the reaction Mur2Ac(oyl-L-Ala-gamma-D-Glu-L-Lys-D-Ala-D-Ala)-di-trans,octa-cis-undecaprenyl diphosphate + UDP-N-acetyl-alpha-D-glucosamine = beta-D-GlcNAc-(1-&gt;4)-Mur2Ac(oyl-L-Ala-gamma-D-Glu-L-Lys-D-Ala-D-Ala)-di-trans,octa-cis-undecaprenyl diphosphate + UDP + H(+). It functions in the pathway cell wall biogenesis; peptidoglycan biosynthesis. Cell wall formation. Catalyzes the transfer of a GlcNAc subunit on undecaprenyl-pyrophosphoryl-MurNAc-pentapeptide (lipid intermediate I) to form undecaprenyl-pyrophosphoryl-MurNAc-(pentapeptide)GlcNAc (lipid intermediate II). This chain is UDP-N-acetylglucosamine--N-acetylmuramyl-(pentapeptide) pyrophosphoryl-undecaprenol N-acetylglucosamine transferase, found in Streptococcus pneumoniae serotype 4 (strain ATCC BAA-334 / TIGR4).